Reading from the N-terminus, the 147-residue chain is Hemoglobin subunit epsilon (147 aa).

In terms of domain architecture, Globin spans 3-147 (HFTAEEKAAI…VAIALGHKYH (145 aa)). Phosphoserine is present on residues Ser-14 and Ser-51. Heme b-binding residues include His-64 and His-93.

It belongs to the globin family. In terms of assembly, heterotetramer of two alpha chains and two epsilon chains in early embryonic hemoglobin Gower-2; two zeta chains and two epsilon chains in early embryonic hemoglobin Gower-1. Red blood cells.

Its function is as follows. The epsilon chain is a beta-type chain of early mammalian embryonic hemoglobin. The polypeptide is Hemoglobin subunit epsilon (HBE1) (Alouatta belzebul (Red-handed howler monkey)).